Consider the following 895-residue polypeptide: Receptor-like protein kinase FERONIA (895 aa).

A signal peptide spans 1–27 (MKITEGRFRLSLLLLLLLISAATLISA). At 28 to 447 (ADYSPTEKIL…TTRKSKSNTA (420 aa)) the chain is on the extracellular side. Asparagine 46, asparagine 124, asparagine 142, asparagine 171, asparagine 219, asparagine 269, asparagine 305, asparagine 330, asparagine 345, and asparagine 410 each carry an N-linked (GlcNAc...) asparagine glycan. The chain crosses the membrane as a helical span at residues 448–468 (IIAGAASGAVVLALIIGFCVF). The Cytoplasmic segment spans residues 469-895 (GAYRRRKRGD…FSQIMNPKGR (427 aa)). The Protein kinase domain occupies 536-810 (FDESRVLGVG…GDVLWNLEFA (275 aa)). ATP is bound by residues 542-550 (LGVGGFGKV) and lysine 565. Aspartate 661 functions as the Proton acceptor in the catalytic mechanism. Residues 844–895 (NDKSSDVYEGNVTDSRSSGIDMSIGGRSLASEDSDGLTPSAVFSQIMNPKGR) are disordered. Phosphoserine is present on residues serine 858, serine 866, serine 871, and serine 874. Polar residues predominate over residues 884 to 895 (AVFSQIMNPKGR).

The protein belongs to the protein kinase superfamily. Ser/Thr protein kinase family. Interacts with ROPGEF1. Interacts with RALF1; triggering phosphorylation status and subsequent activation. Interacts with LRE and LLG1. Interacts, via its extracellular domain, with FERONIA at the synergid cell surface. In terms of processing, autophosphorylated. Phosphorylated at Ser-858, Ser-871 and Ser-874 upon activation by RALF1. Expressed in leaves, buds, flowers, siliques, young ovules primordia, and young anthers with immature pollen, but not detected in mature pollen. Highest expression in the synergid cells of the female gametophyte.

It is found in the cell membrane. It carries out the reaction L-seryl-[protein] + ATP = O-phospho-L-seryl-[protein] + ADP + H(+). The catalysed reaction is L-threonyl-[protein] + ATP = O-phospho-L-threonyl-[protein] + ADP + H(+). Its function is as follows. Receptor-like protein kinase that mediates the female control of male gamete delivery during fertilization, including growth cessation of compatible pollen tubes ensuring a reproductive isolation barriers, by regulating MLO7 subcellular polarization upon pollen tube perception in the female gametophyte synergids. Required for cell elongation during vegetative growth, mostly in a brassinosteroids- (BR-) independent manner. Acts as an upstream regulator for the Rac/Rop-signaling pathway that controls ROS-mediated root hair development. Seems to regulate a cross-talk between brassinosteroids and ethylene signaling pathways during hypocotyl elongation. Negative regulator of brassinosteroid response in light-grown hypocotyls, but required for brassinosteroid response in etiolated seedlings. Mediates sensitivity to powdery mildew (e.g. Golovinomyces orontii). Positive regulator of auxin-promoted growth that represses the abscisic acid (ABA) signaling via the activation of ABI2 phosphatase. Required for RALF1-mediated extracellular alkalinization in a signaling pathway preventing cell expansion. The protein is Receptor-like protein kinase FERONIA of Arabidopsis thaliana (Mouse-ear cress).